Reading from the N-terminus, the 207-residue chain is N-(5'-phosphoribosyl)anthranilate isomerase (207 aa).

Belongs to the TrpF family.

It carries out the reaction N-(5-phospho-beta-D-ribosyl)anthranilate = 1-(2-carboxyphenylamino)-1-deoxy-D-ribulose 5-phosphate. The protein operates within amino-acid biosynthesis; L-tryptophan biosynthesis; L-tryptophan from chorismate: step 3/5. This Legionella pneumophila (strain Lens) protein is N-(5'-phosphoribosyl)anthranilate isomerase.